A 122-amino-acid chain; its full sequence is Large ribosomal subunit protein uL14 (122 aa).

It belongs to the universal ribosomal protein uL14 family. As to quaternary structure, part of the 50S ribosomal subunit. Forms a cluster with proteins L3 and L19. In the 70S ribosome, L14 and L19 interact and together make contacts with the 16S rRNA in bridges B5 and B8.

Binds to 23S rRNA. Forms part of two intersubunit bridges in the 70S ribosome. This Rhodococcus jostii (strain RHA1) protein is Large ribosomal subunit protein uL14.